The sequence spans 187 residues: Ribosome maturation factor RimM (187 aa).

The 93-residue stretch at 91 to 183 folds into the PRC barrel domain; sequence DDGFYDHELE…ILVLTPPEGL (93 aa).

Belongs to the RimM family. As to quaternary structure, binds ribosomal protein uS19.

Its subcellular location is the cytoplasm. Its function is as follows. An accessory protein needed during the final step in the assembly of 30S ribosomal subunit, possibly for assembly of the head region. Essential for efficient processing of 16S rRNA. May be needed both before and after RbfA during the maturation of 16S rRNA. It has affinity for free ribosomal 30S subunits but not for 70S ribosomes. In Corynebacterium jeikeium (strain K411), this protein is Ribosome maturation factor RimM.